A 348-amino-acid polypeptide reads, in one-letter code: UDP-glucose 4-epimerase (348 aa).

Residue Thr125 participates in substrate binding. Tyr149 acts as the Proton acceptor in catalysis.

Belongs to the NAD(P)-dependent epimerase/dehydratase family. Requires NAD(+) as cofactor.

It catalyses the reaction UDP-alpha-D-glucose = UDP-alpha-D-galactose. Its pathway is carbohydrate metabolism; galactose metabolism. It participates in glycan metabolism; exopolysaccharide biosynthesis. The protein is UDP-glucose 4-epimerase (exoB) of Azospirillum brasilense.